The following is a 555-amino-acid chain: Connector enhancer of kinase suppressor of ras 3 (555 aa).

One can recognise an SAM domain in the interval 7 to 72 (WSPKQVVDWT…LEAVDLLCAL (66 aa)). The CRIC domain maps to 80–174 (TMKNLVLKLR…TAVQKDCLIA (95 aa)). The region spanning 211-293 (EVHLPNVRPG…GVVLLLKKRP (83 aa)) is the PDZ domain. Disordered stretches follow at residues 308-333 (RWKP…MDAS), 362-389 (SFGY…SFLD), and 518-538 (PFQE…ASSG). A compositionally biased stretch (low complexity) spans 311–329 (PPLVQTSPPPTTTQSPEST). The DUF1170 domain occupies 325 to 546 (SPESTMDASL…SGEPSLLVSW (222 aa)). S381 and S383 each carry phosphoserine.

The protein belongs to the CNKSR family. Interacts with epithelial sodium channel ENaC. Interacts directly with SCNN1A (ENaC subunit alpha) and SCNN1B (ENaC subunit beta) C-terminal tails. Interacts with ENaC regulatory proteins NEDD4L, RAF1 and SGK1. Expressed in kidney.

Its subcellular location is the cytoplasm. The protein localises to the apical cell membrane. Its function is as follows. Involved in transepithelial sodium transport. Regulates aldosterone-induced and epithelial sodium channel (ENaC)-mediated sodium transport through regulation of ENaC cell surface expression. Acts as a scaffold protein coordinating the assembly of an ENaC-regulatory complex (ERC). This is Connector enhancer of kinase suppressor of ras 3 (Cnksr3) from Mus musculus (Mouse).